The following is a 361-amino-acid chain: MTLLRIDGSYGEGGGQIIRTALSLAALTGTAVRLENIRARRRKPGLAAQHLTAVKAVALLCDARIGGAELGSQTLEFIPGRPVRAGDYTLDVGEAREGGSAGAVMLVLQTVLPPLALAEGASTVSLRGGTHVPMSPPFDYVREVWLPTLARMGVRAELSLVRSGWYPVGKGEVRLVVAGGRRSLEALKARHRGTLQAVTGRALAANLPAHIPERMAARARAVLADAGIAAAIEPAVLQAACAGAGLFLTARYDHCLAGFTALGRRGKSAERVAEEACGALLAHHRSGAALDQHLADQIVLPAALCREESLFSVERITPHLTTNAWVVDRFGLARVDVRLAECGTGLVRIHGNPAGVCHAHP.

Residues Q109 and 293-297 (HLADQ) each bind ATP. H319 functions as the Tele-AMP-histidine intermediate in the catalytic mechanism.

Belongs to the RNA 3'-terminal cyclase family. Type 1 subfamily.

The protein localises to the cytoplasm. It catalyses the reaction a 3'-end 3'-phospho-ribonucleotide-RNA + ATP = a 3'-end 2',3'-cyclophospho-ribonucleotide-RNA + AMP + diphosphate. Catalyzes the conversion of 3'-phosphate to a 2',3'-cyclic phosphodiester at the end of RNA. The mechanism of action of the enzyme occurs in 3 steps: (A) adenylation of the enzyme by ATP; (B) transfer of adenylate to an RNA-N3'P to produce RNA-N3'PP5'A; (C) and attack of the adjacent 2'-hydroxyl on the 3'-phosphorus in the diester linkage to produce the cyclic end product. The biological role of this enzyme is unknown but it is likely to function in some aspects of cellular RNA processing. The sequence is that of RNA 3'-terminal phosphate cyclase from Methylococcus capsulatus (strain ATCC 33009 / NCIMB 11132 / Bath).